The chain runs to 221 residues: Tumor protein p53-inducible nuclear protein 2 (221 aa).

Residues Val-26–Gln-41 carry the LIR motif. Positions Gln-41–Asp-68 are disordered. The span at Pro-47–Pro-64 shows a compositional bias: pro residues. At Ser-136 the chain carries Phosphoserine. The tract at residues Arg-177–Phe-210 is disordered.

In terms of assembly, interacts with VMP1, GABARAP, GABARAPL1, GABARAPL2, MAP1LC3A, MAP1LC3B, MAP1LC3C and THRA.

Its subcellular location is the cytoplasm. The protein resides in the cytosol. It localises to the nucleus. The protein localises to the PML body. It is found in the cytoplasmic vesicle. Its subcellular location is the autophagosome. Functionally, dual regulator of transcription and autophagy. Positively regulates autophagy and is required for autophagosome formation and processing. May act as a scaffold protein that recruits MAP1LC3A, GABARAP and GABARAPL2 and brings them to the autophagosome membrane by interacting with VMP1 where, in cooperation with the BECN1-PI3-kinase class III complex, they trigger autophagosome development. Acts as a transcriptional activator of THRA. This is Tumor protein p53-inducible nuclear protein 2 (Tp53inp2) from Mus musculus (Mouse).